Consider the following 727-residue polypeptide: Rho-related BTB domain-containing protein 2 (727 aa).

A rho-like region spans residues 1 to 210; the sequence is MDSDMDYERP…DNAIRAALIS (210 aa). GTP contacts are provided by residues 21 to 28, 84 to 88, and 140 to 143; these read GDNAVGKT, DTFGD, and CQLD. 2 BTB domains span residues 266–442 and 500–567; these read ADVI…DENE and SDVT…TSSP. A disordered region spans residues 304–333; that stretch reads ELGGPSEPGGTHPEDHQGHSDQHHHHHHHH. Residues 315–324 show a composition bias toward basic and acidic residues; it reads HPEDHQGHSD. The tract at residues 703–727 is disordered; sequence FWNSPSSPSSSAASSSSPSSSSAVV. A compositionally biased stretch (low complexity) spans 706–727; it reads SPSSPSSSAASSSSPSSSSAVV.

This sequence belongs to the small GTPase superfamily. Rho family. Interacts with HSP90AA1 and HSP90AB1. Forms a complex with CUL3 and RBX1. Interacts (via BTB 1 domain) with CUL3. Interacts with MSI2. Autoubiquitinated by RHOBTB2-CUL3-RBX1 ubiquitin ligase complex. As to expression, ubiquitous, with highest levels in neural tissues. Expression is also detected in fetal lung, heart, and brain.

Its function is as follows. Regulator of cell proliferation and apoptosis. It likely functions as a substrate-adapter that recruits key substrates, e.g. MSI2, to CUL3-based ubiquitin ligase complexes for degradation. Required for MSI2 ubiquitination and degradation. The sequence is that of Rho-related BTB domain-containing protein 2 (RHOBTB2) from Homo sapiens (Human).